Reading from the N-terminus, the 194-residue chain is DPY30 domain-containing protein 2 (194 aa).

Positions glutamate 126–glutamate 172 are disordered. Residues proline 149–valine 163 show a composition bias toward low complexity.

This sequence belongs to the dpy-30 family.

The chain is DPY30 domain-containing protein 2 (DYDC2) from Bos taurus (Bovine).